The chain runs to 348 residues: MNIAVSKPPLTIRLCGPRGFCAGVDRAIQIVVLALKAYGAPVYVRHEIVHNRYVVEGLEAKGAIFVEELHEIPAEHREQPVVFSAHGVPKSVPEDAQARNLFYLDATCPLVSKVHKQAMRHQRLGRHVVLIGHAGHPEVIGTMGQLPEGTVSLVETVEDAGVYEPVDRENLGFVTQTTLSVDDTAGVIARLQERFPAIQAPAADSICYATTNRQDAVKQAAPGCDLFIVVGAPNSSNSKRLVEVALRAGAKHSVLVQRASEIDWNEIGDIRTVGLSAGASAPEVIVDEIIEAFKARFDTTLDLAVTVEETEHFLVNRELRSIELTTDDMAFVNGNASNALPPKATAGI.

Cys21 contacts [4Fe-4S] cluster. Residues His50 and His86 each contribute to the (2E)-4-hydroxy-3-methylbut-2-enyl diphosphate site. Dimethylallyl diphosphate-binding residues include His50 and His86. Positions 50 and 86 each coordinate isopentenyl diphosphate. Cys108 serves as a coordination point for [4Fe-4S] cluster. A (2E)-4-hydroxy-3-methylbut-2-enyl diphosphate-binding site is contributed by His136. His136 serves as a coordination point for dimethylallyl diphosphate. Position 136 (His136) interacts with isopentenyl diphosphate. Glu138 acts as the Proton donor in catalysis. Thr177 is a binding site for (2E)-4-hydroxy-3-methylbut-2-enyl diphosphate. Residue Cys207 coordinates [4Fe-4S] cluster. (2E)-4-hydroxy-3-methylbut-2-enyl diphosphate is bound by residues Ser235, Ser236, Asn237, and Ser280. Dimethylallyl diphosphate contacts are provided by Ser235, Ser236, Asn237, and Ser280. Residues Ser235, Ser236, Asn237, and Ser280 each coordinate isopentenyl diphosphate.

This sequence belongs to the IspH family. [4Fe-4S] cluster serves as cofactor.

The enzyme catalyses isopentenyl diphosphate + 2 oxidized [2Fe-2S]-[ferredoxin] + H2O = (2E)-4-hydroxy-3-methylbut-2-enyl diphosphate + 2 reduced [2Fe-2S]-[ferredoxin] + 2 H(+). The catalysed reaction is dimethylallyl diphosphate + 2 oxidized [2Fe-2S]-[ferredoxin] + H2O = (2E)-4-hydroxy-3-methylbut-2-enyl diphosphate + 2 reduced [2Fe-2S]-[ferredoxin] + 2 H(+). The protein operates within isoprenoid biosynthesis; dimethylallyl diphosphate biosynthesis; dimethylallyl diphosphate from (2E)-4-hydroxy-3-methylbutenyl diphosphate: step 1/1. Its pathway is isoprenoid biosynthesis; isopentenyl diphosphate biosynthesis via DXP pathway; isopentenyl diphosphate from 1-deoxy-D-xylulose 5-phosphate: step 6/6. In terms of biological role, catalyzes the conversion of 1-hydroxy-2-methyl-2-(E)-butenyl 4-diphosphate (HMBPP) into a mixture of isopentenyl diphosphate (IPP) and dimethylallyl diphosphate (DMAPP). Acts in the terminal step of the DOXP/MEP pathway for isoprenoid precursor biosynthesis. The polypeptide is 4-hydroxy-3-methylbut-2-enyl diphosphate reductase (Agrobacterium fabrum (strain C58 / ATCC 33970) (Agrobacterium tumefaciens (strain C58))).